We begin with the raw amino-acid sequence, 237 residues long: MIEAESQMAEAASYEEQRRRQVEANKRKLEELRLHHLSAAVRESASKPSPVKQRKRKARALPGAGEDAPLRRSGRVANLPEKPKYRDEFQDFEKRIRRSYGGKRRDLSNRVYATDEQRDYAINAAQELEEELGSDYPIFVKPMLQSHVTGGFWLSLPTHFSRKYLPKRDETIRLVDEEDDEFDTLYLANKRGLSGGWRGFSIAHKLVDGDCLVFQLIQRTKFKVYIIRASSYYETDD.

2 disordered regions span residues 1-23 (MIEA…RQVE) and 38-82 (SAAV…LPEK). The TF-B3 DNA-binding region spans 139–230 (FVKPMLQSHV…KFKVYIIRAS (92 aa)).

It is found in the nucleus. The chain is B3 domain-containing protein Os06g0194400 from Oryza sativa subsp. japonica (Rice).